Reading from the N-terminus, the 98-residue chain is MVKYFQVLWSLLFSIMLHSMLLAAPGARVWWPTHGLIKIKCPYKKVKLSWFNKTVDPCPGLKQPICGTNFVTYDNPCILCVESLKSGGQIRYYHTGRC.

The signal sequence occupies residues 1-23 (MVKYFQVLWSLLFSIMLHSMLLA). The region spanning 35–98 (GLIKIKCPYK…QIRYYHTGRC (64 aa)) is the Kazal-like domain. 3 cysteine pairs are disulfide-bonded: C41/C80, C58/C77, and C66/C98. A glycan (N-linked (GlcNAc...) asparagine) is linked at N52.

It localises to the secreted. In terms of biological role, may be a serine protease inhibitor. In Rattus norvegicus (Rat), this protein is Serine protease inhibitor Kazal-type 14 (Spink14).